A 168-amino-acid chain; its full sequence is Endoribonuclease YbeY (168 aa).

Zn(2+)-binding residues include His-126, His-130, and His-136.

This sequence belongs to the endoribonuclease YbeY family. Zn(2+) is required as a cofactor.

It is found in the cytoplasm. Its function is as follows. Single strand-specific metallo-endoribonuclease involved in late-stage 70S ribosome quality control and in maturation of the 3' terminus of the 16S rRNA. The polypeptide is Endoribonuclease YbeY (Sinorhizobium medicae (strain WSM419) (Ensifer medicae)).